The primary structure comprises 460 residues: Phosphoenolpyruvate carboxylase (460 aa).

Belongs to the PEPCase type 2 family. In terms of assembly, homotetramer. It depends on Mg(2+) as a cofactor.

The enzyme catalyses oxaloacetate + phosphate = phosphoenolpyruvate + hydrogencarbonate. In terms of biological role, catalyzes the irreversible beta-carboxylation of phosphoenolpyruvate (PEP) to form oxaloacetate (OAA), a four-carbon dicarboxylic acid source for the tricarboxylic acid cycle. The polypeptide is Phosphoenolpyruvate carboxylase (Pyrobaculum aerophilum (strain ATCC 51768 / DSM 7523 / JCM 9630 / CIP 104966 / NBRC 100827 / IM2)).